Reading from the N-terminus, the 134-residue chain is Ribonuclease VapC1 (134 aa).

The 130-residue stretch at 3–132 (YMLDTNIIIY…RITDLQWQDW (130 aa)) folds into the PINc domain. Mg(2+) contacts are provided by Asp-6 and Asp-99.

Belongs to the PINc/VapC protein family. It depends on Mg(2+) as a cofactor.

In terms of biological role, toxic component of a type II toxin-antitoxin (TA) system. Acts as an RNase, its toxic effect is neutralized by VapB1 antitoxin. This chain is Ribonuclease VapC1, found in Haemophilus influenzae (strain ATCC 51907 / DSM 11121 / KW20 / Rd).